Reading from the N-terminus, the 513-residue chain is Zinc finger CCCH-type with G patch domain-containing protein (513 aa).

The C3H1-type zinc-finger motif lies at 155 to 178 (PCSYYLEGECRFDETKCRFSHGAL). Positions 252 to 261 (DQEEDDELSS) are enriched in acidic residues. Residues 252 to 282 (DQEEDDELSSEESNSSMNNESSDEAESDMDD) are disordered. Residues 262–271 (EESNSSMNNE) are compositionally biased toward low complexity. Acidic residues predominate over residues 272–282 (SSDEAESDMDD). The region spanning 312–358 (TRGIGSKLMEKMGYIHGTGLGSDGRGIVTPVSAQILPQGRSLDACME) is the G-patch domain. Residues 478–495 (VQMQSHKQELATLQAQER) show a composition bias toward polar residues. A disordered region spans residues 478 to 513 (VQMQSHKQELATLQAQERSLSKEQQTRKSKNKMFEF). The segment covering 496 to 513 (SLSKEQQTRKSKNKMFEF) has biased composition (basic and acidic residues).

It localises to the nucleus. In terms of biological role, transcription repressor. In Drosophila erecta (Fruit fly), this protein is Zinc finger CCCH-type with G patch domain-containing protein.